The primary structure comprises 426 residues: Tektin-1 (426 aa).

Coiled-coil stretches lie at residues 21–84 (KNQY…LEQL), 268–307 (LKET…LDQE), and 339–383 (KEVG…ENTI). Positions 396-426 (SNPLRDGGDQGQWARACAPTPSAEDGTSHTD) are disordered.

The protein belongs to the tektin family. In terms of assembly, microtubule inner protein component of sperm flagellar doublet microtubules. Ubiquitinated, leading to its degradation. Deubiquitinated by USP16, promoting its stability.

It localises to the cytoplasm. The protein localises to the cytoskeleton. Its subcellular location is the cilium axoneme. The protein resides in the flagellum axoneme. Its function is as follows. Microtubule inner protein (MIP) part of the dynein-decorated doublet microtubules (DMTs) in cilia and flagellar axoneme. Forms filamentous polymers in the walls of ciliary and flagellar microtubules. The protein is Tektin-1 (TEKT1) of Canis lupus familiaris (Dog).